Here is a 434-residue protein sequence, read N- to C-terminus: Enolase (434 aa).

His158 and Glu167 together coordinate substrate. The active-site Proton donor is Glu210. The Mg(2+) site is built by Asp245, Glu294, and Asp319. Positions 294 and 319 each coordinate substrate. Catalysis depends on Lys344, which acts as the Proton acceptor. Residues Ser371–Ser374 and Lys395 contribute to the substrate site.

This sequence belongs to the enolase family. As to quaternary structure, homodimer. Mg(2+) serves as cofactor.

Its subcellular location is the cytoplasm. It catalyses the reaction (2R)-2-phosphoglycerate = phosphoenolpyruvate + H2O. The protein operates within carbohydrate degradation; glycolysis; pyruvate from D-glyceraldehyde 3-phosphate: step 4/5. This Caenorhabditis elegans protein is Enolase.